Consider the following 307-residue polypeptide: 1-phosphofructokinase (307 aa).

ATP-binding positions include 217-222 (SMGSDG) and 249-250 (GD). Residue Asp250 is the Proton acceptor of the active site.

This sequence belongs to the carbohydrate kinase PfkB family.

It catalyses the reaction beta-D-fructose 1-phosphate + ATP = beta-D-fructose 1,6-bisphosphate + ADP + H(+). Its function is as follows. Catalyzes the ATP-dependent phosphorylation of fructose-l-phosphate to fructose-l,6-bisphosphate. This is 1-phosphofructokinase (fruK) from Borreliella burgdorferi (strain ATCC 35210 / DSM 4680 / CIP 102532 / B31) (Borrelia burgdorferi).